The primary structure comprises 478 residues: Serine/threonine-protein phosphatase 2A activator 1 (478 aa).

The disordered stretch occupies residues 359–478; that stretch reads DPSAIPPPSR…DITTKAPWAK (120 aa). Over residues 396 to 419 the composition is skewed to low complexity; the sequence is APWATASQSTPPPSTGTAAPWATS.

It belongs to the PTPA-type PPIase family.

The protein resides in the cytoplasm. Its subcellular location is the nucleus. It carries out the reaction [protein]-peptidylproline (omega=180) = [protein]-peptidylproline (omega=0). Its function is as follows. PPIases accelerate the folding of proteins. It catalyzes the cis-trans isomerization of proline imidic peptide bonds in oligopeptides. Acts as a regulatory subunit for PP2A-like phosphatases modulating their activity or substrate specificity, probably by inducing a conformational change in the catalytic subunit, a direct target of the PPIase. Can reactivate inactive phosphatase PP2A-phosphatase methylesterase complexes (PP2Ai) in presence of ATP and Mg(2+) by dissociating the inactive form from the complex. This is Serine/threonine-protein phosphatase 2A activator 1 (rrd1) from Aspergillus oryzae (strain ATCC 42149 / RIB 40) (Yellow koji mold).